A 292-amino-acid chain; its full sequence is Acetyl-coenzyme A carboxylase carboxyl transferase subunit beta (292 aa).

The region spanning 29–292 is the CoA carboxyltransferase N-terminal domain; sequence LWSKCPECGQ…HGCLQGSAAV (264 aa). Zn(2+) is bound by residues cysteine 33, cysteine 36, cysteine 52, and cysteine 55. The segment at 33–55 adopts a C4-type zinc-finger fold; it reads CPECGQVVYRKDLLANASVCSNC.

The protein belongs to the AccD/PCCB family. As to quaternary structure, acetyl-CoA carboxylase is a heterohexamer composed of biotin carboxyl carrier protein (AccB), biotin carboxylase (AccC) and two subunits each of ACCase subunit alpha (AccA) and ACCase subunit beta (AccD). Requires Zn(2+) as cofactor.

It localises to the cytoplasm. It catalyses the reaction N(6)-carboxybiotinyl-L-lysyl-[protein] + acetyl-CoA = N(6)-biotinyl-L-lysyl-[protein] + malonyl-CoA. It functions in the pathway lipid metabolism; malonyl-CoA biosynthesis; malonyl-CoA from acetyl-CoA: step 1/1. Functionally, component of the acetyl coenzyme A carboxylase (ACC) complex. Biotin carboxylase (BC) catalyzes the carboxylation of biotin on its carrier protein (BCCP) and then the CO(2) group is transferred by the transcarboxylase to acetyl-CoA to form malonyl-CoA. This chain is Acetyl-coenzyme A carboxylase carboxyl transferase subunit beta, found in Synechococcus sp. (strain WH7803).